Consider the following 464-residue polypeptide: Cysteine--tRNA ligase (464 aa).

Residue Cys-29 participates in Zn(2+) binding. The 'HIGH' region signature appears at 31–41 (ATVQGDPHIGH). Cys-207, His-232, and Glu-236 together coordinate Zn(2+). Residues 263–267 (KMSKS) carry the 'KMSKS' region motif. Lys-266 is a binding site for ATP.

Belongs to the class-I aminoacyl-tRNA synthetase family. As to quaternary structure, monomer. It depends on Zn(2+) as a cofactor.

The protein resides in the cytoplasm. The catalysed reaction is tRNA(Cys) + L-cysteine + ATP = L-cysteinyl-tRNA(Cys) + AMP + diphosphate. The sequence is that of Cysteine--tRNA ligase from Rhodococcus opacus (strain B4).